The following is a 121-amino-acid chain: DNA-directed RNA polymerase subunit omega (121 aa).

The segment at 95–121 (DGDAANDLQGEEDDLGLGLDEAEDLGF) is disordered. Residues 103–121 (QGEEDDLGLGLDEAEDLGF) show a composition bias toward acidic residues.

It belongs to the RNA polymerase subunit omega family. The RNAP catalytic core consists of 2 alpha, 1 beta, 1 beta' and 1 omega subunit. When a sigma factor is associated with the core the holoenzyme is formed, which can initiate transcription.

The catalysed reaction is RNA(n) + a ribonucleoside 5'-triphosphate = RNA(n+1) + diphosphate. Promotes RNA polymerase assembly. Latches the N- and C-terminal regions of the beta' subunit thereby facilitating its interaction with the beta and alpha subunits. In Magnetococcus marinus (strain ATCC BAA-1437 / JCM 17883 / MC-1), this protein is DNA-directed RNA polymerase subunit omega.